Reading from the N-terminus, the 362-residue chain is Outer membrane porin F (362 aa).

The first 22 residues, 1 to 22 (MMKRNILAVIVPALLVAGTANA), serve as a signal peptide directing secretion. Residues 23–28 (AEIYNK) form a beta stranded membrane-spanning segment. A topological domain (periplasmic) is located at residue Asp29. The chain crosses the membrane as a beta stranded span at residues 30–45 (GNKVDLYGKAVGLHYF). Topologically, residues 46-60 (SKGNGENSYGGNGDM) are extracellular. A beta stranded membrane pass occupies residues 61–73 (TYARLGFKGETQI). The Periplasmic segment spans residues 74-75 (NS). The beta stranded transmembrane segment at 76–88 (DLTGYGQWEYNFQ) threads the bilayer. The Extracellular segment spans residues 89 to 104 (GNNSEGADAQTGNKTR). A beta stranded membrane pass occupies residues 105 to 113 (LAFAGLKYA). The Periplasmic portion of the chain corresponds to 114–115 (DV). A beta stranded transmembrane segment spans residues 116-122 (GSFDYGR). The Extracellular segment spans residues 123–156 (NYGVVYDALGYTDMLPEFGGDTAYSDDFFVGRVG). A beta stranded transmembrane segment spans residues 157-163 (GVATYRN). The Periplasmic portion of the chain corresponds to 164 to 171 (SNFFGLVD). Residues 172 to 181 (GLNFAVQYLG) traverse the membrane as a beta stranded segment. Residues 182-193 (KNERDTARRSNG) are Extracellular-facing. The chain crosses the membrane as a beta stranded span at residues 194-204 (DGVGGSISYEY). Residue Glu205 is a topological domain, periplasmic. The beta stranded transmembrane segment at 206–217 (GFGIVGAYGAAD) threads the bilayer. The Extracellular segment spans residues 218 to 232 (RTNLQEAQPLGNGKK). A beta stranded membrane pass occupies residues 233–244 (AEQWATGLKYDA). Residue Asn245 is a topological domain, periplasmic. Residues 246 to 257 (NIYLAANYGETR) traverse the membrane as a beta stranded segment. The Extracellular portion of the chain corresponds to 258–274 (NATPITNKFTNTSGFAN). A beta stranded transmembrane segment spans residues 275-287 (KTQDVLLVAQYQF). At 288–289 (DF) the chain is on the periplasmic side. A beta stranded transmembrane segment spans residues 290 to 303 (GLRPSIAYTKSKAK). Topologically, residues 304–313 (DVEGIGDVDL) are extracellular. A beta stranded membrane pass occupies residues 314 to 325 (VNYFEVGATYYF). Residues 326–327 (NK) lie on the Periplasmic side of the membrane. Residues 328-337 (NMSTYVDYII) form a beta stranded membrane-spanning segment. The Extracellular segment spans residues 338–352 (NQIDSDNKLGVGSDD). A beta stranded transmembrane segment spans residues 353-362 (TVAVGIVYQF).

It belongs to the Gram-negative porin family. As to quaternary structure, homotrimer. Forms mixed heterotrimers with OmpC and with PhoE; other mixed heterotrimers are also probable. In terms of assembly, (Microbial infection) Trimeric complexes with colicin E3, BtuB and OmpF can be cross-linked and immunoprecipitated.

Its subcellular location is the cell outer membrane. In terms of biological role, forms pores that allow passive diffusion of small molecules across the outer membrane. Functionally, (Microbial infection) It is also a receptor for the bacteriophage T2. Is the major receptor for colicin E5. Its function is as follows. (Microbial infection) Probably translocates colicin E3 (and other A-type colicins) across the outer membrane. (Microbial infection) A mixed OmpC-OmpF heterotrimer is the outer membrane receptor for toxin CdiA-EC536 (ECL_04451); polymorphisms in extracellular loops 4 and 5 of OmpC confer susceptibility to CdiA-EC536-mediated toxicity. This is Outer membrane porin F (ompF) from Escherichia coli (strain K12).